We begin with the raw amino-acid sequence, 66 residues long: Type 3 secretion system chaperone YscE (66 aa).

The protein belongs to the YscE family. Component of the heterodimeric YscE-YscG chaperone. The YscE-YscG chaperone forms a stable ternary complex with YscF/SctF.

It is found in the cytoplasm. Functionally, chaperone of the type III secretion system (T3SS), also called injectisome, which is used to inject bacterial effector proteins into eukaryotic host cells. Along with YscG, prevents premature polymerization of the YscF/SctF needle protein within the cytoplasm. Required for Yop secretion. The polypeptide is Type 3 secretion system chaperone YscE (Yersinia enterocolitica).